The sequence spans 153 residues: LOB domain-containing protein 26 (153 aa).

The 102-residue stretch at 4–105 folds into the LOB domain; it reads NPCEVCRFQN…EEVSKTKKLL (102 aa). The interval 126–153 is disordered; the sequence is KSKPSVLRKRKRKTKSSDESAIRVVEDS. Over residues 140–153 the composition is skewed to basic and acidic residues; that stretch reads KSSDESAIRVVEDS.

The protein belongs to the LOB domain-containing protein family.

This chain is LOB domain-containing protein 26 (LBD26), found in Arabidopsis thaliana (Mouse-ear cress).